The primary structure comprises 275 residues: Secreted RxLR effector protein 153 (275 aa).

A signal peptide spans 1–27; it reads MRNRAFLFGLFFIEYACLVLFAAPTRA. An N-linked (GlcNAc...) asparagine glycan is attached at Asn-45. The RxLR-dEER signature appears at 48–63; it reads RTLQADDSKRISAEER.

It belongs to the RxLR effector family.

Its subcellular location is the secreted. The protein localises to the host cell membrane. Secreted effector that completely suppresses the host cell death induced by cell death-inducing proteins. The chain is Secreted RxLR effector protein 153 from Plasmopara viticola (Downy mildew of grapevine).